Here is a 260-residue protein sequence, read N- to C-terminus: MAKEWGYASHNGPEHWHELYPIAKGDNQSPIELHTKDIRHDPSLQPWSVSYDPGSAKTILNNGKTCRVVFDDTFDRSMLRGGPLSGPYRLRQFHLHWGSSDDHGSEHTVDGVKYAAELHLVHWNPKYNTFGEALKQPDGIAVVGIFLKIGREKGEFQILLDALDKIKTKGKEAPFNHFDPSCLFPACRDYWTYHGSFTTPPCEECIVWLLLKEPMTVSSDQMAKLRSLFASAENEPPVPLVGNWRPPQPIKGRVVRASFK.

Residue alanine 2 is modified to N-acetylalanine. In terms of domain architecture, Alpha-carbonic anhydrase spans 3-259; the sequence is KEWGYASHNG…IKGRVVRASF (257 aa). Residues serine 29, serine 43, serine 48, serine 50, and serine 55 each carry the phosphoserine modification. The tract at residues 64-67 is involved in proton transfer; that stretch reads KTCR. Position 73 is a phosphothreonine (threonine 73). The Zn(2+) site is built by histidine 94, histidine 96, and histidine 119. Tyrosine 127 is modified (phosphotyrosine). The residue at position 129 (threonine 129) is a Phosphothreonine. Cysteine 182 and cysteine 187 each carry S-glutathionyl cysteine. A substrate-binding site is contributed by 198–199; sequence TT. Residue threonine 216 is modified to Phosphothreonine. Serine 219 carries the phosphoserine modification.

Belongs to the alpha-carbonic anhydrase family. The cofactor is Zn(2+). In terms of processing, S-thiolated both by thiol-disulfide exchange with glutathione disulfide and by oxyradical-initiated S-thiolation with reduced glutathione. S-glutathionylated in hepatocytes under oxidative stress. Expressed in liver and muscle.

It localises to the cytoplasm. It catalyses the reaction hydrogencarbonate + H(+) = CO2 + H2O. Its activity is regulated as follows. Inhibited by acetazolamide. In terms of biological role, reversible hydration of carbon dioxide. The protein is Carbonic anhydrase 3 (Ca3) of Rattus norvegicus (Rat).